The chain runs to 220 residues: Large ribosomal subunit protein uL4 (220 aa).

Residues 45–102 (AARQGTHKTKTRGEVRGGGRKPFRQKGTGRARQGSIRAPHYTGGGTVHGPVPRDYSQR) form a disordered region. Residues 62–73 (GGRKPFRQKGTG) show a composition bias toward basic residues.

It belongs to the universal ribosomal protein uL4 family. As to quaternary structure, part of the 50S ribosomal subunit.

In terms of biological role, one of the primary rRNA binding proteins, this protein initially binds near the 5'-end of the 23S rRNA. It is important during the early stages of 50S assembly. It makes multiple contacts with different domains of the 23S rRNA in the assembled 50S subunit and ribosome. Its function is as follows. Forms part of the polypeptide exit tunnel. The sequence is that of Large ribosomal subunit protein uL4 from Corynebacterium aurimucosum (strain ATCC 700975 / DSM 44827 / CIP 107346 / CN-1) (Corynebacterium nigricans).